A 68-amino-acid polypeptide reads, in one-letter code: Small ribosomal subunit protein eS17 (68 aa).

It belongs to the eukaryotic ribosomal protein eS17 family.

In Staphylothermus marinus (strain ATCC 43588 / DSM 3639 / JCM 9404 / F1), this protein is Small ribosomal subunit protein eS17.